Here is a 65-residue protein sequence, read N- to C-terminus: Large ribosomal subunit protein bL35 (65 aa).

The interval 1–65 (MPKIKTNRAA…GRLDRMLPYL (65 aa)) is disordered. A compositionally biased stretch (basic residues) spans 10 to 44 (AAKRFRKTASGKYKAGHANRSHILTKKATKRKRNL). A compositionally biased stretch (basic and acidic residues) spans 50 to 65 (VRAEDAGRLDRMLPYL).

It belongs to the bacterial ribosomal protein bL35 family.

In Xylella fastidiosa (strain M23), this protein is Large ribosomal subunit protein bL35.